The primary structure comprises 130 residues: Capsid protein (130 aa).

Residues 31–104 are viral RNA-binding; the sequence is EWLSNNSRSQ…FAATDDVTVI (74 aa).

The protein belongs to the Leviviricetes capsid protein family. In terms of assembly, homodimer. The capsid proteins form dimers that assemble by group of 5. Twelve such pentamers are linked together with free dimers. The homodimers binds to the viral RNA via an operator hairpin, but also to many other RNA sequences in the viral genome; this interaction probably shifts the virus from the replicative to the assembly phase and ensures specific encapsidation of the viral genome.

It is found in the virion. Functionally, capsid protein self-assembles to form an icosahedral capsid with a T=3 symmetry, about 26 nm in diameter, and consisting of 89 capsid proteins dimers (178 capsid proteins). Involved in viral genome encapsidation through the interaction between a capsid protein dimer and the multiple packaging signals present in the RNA genome. The capsid also contains 1 copy of the A2 maturation protein. Its function is as follows. Acts as a translational repressor of viral replicase synthesis late in infection. This latter function is the result of capsid protein interaction with an RNA hairpin which contains the replicase ribosome-binding site. The chain is Capsid protein from Escherichia coli (Bacteriophage JP34).